The primary structure comprises 313 residues: NAD-capped RNA hydrolase NudC (313 aa).

Substrate is bound at residue Arg-111. Residues 168 to 293 enclose the Nudix hydrolase domain; sequence PRIDPAVICL…DWSSASESKL (126 aa). The a divalent metal cation site is built by Ala-202, Glu-218, and Glu-222. Residues 203 to 224 carry the Nudix box motif; the sequence is GFVEAGESFEVCVAREIREEIG. 236-243 provides a ligand contact to substrate; the sequence is QPWPFPRS. Glu-264 provides a ligand contact to a divalent metal cation.

Belongs to the Nudix hydrolase family. NudC subfamily. As to quaternary structure, homodimer. Requires Mg(2+) as cofactor. Mn(2+) serves as cofactor.

The enzyme catalyses a 5'-end NAD(+)-phospho-ribonucleoside in mRNA + H2O = a 5'-end phospho-adenosine-phospho-ribonucleoside in mRNA + beta-nicotinamide D-ribonucleotide + 2 H(+). It catalyses the reaction NAD(+) + H2O = beta-nicotinamide D-ribonucleotide + AMP + 2 H(+). It carries out the reaction NADH + H2O = reduced beta-nicotinamide D-ribonucleotide + AMP + 2 H(+). In terms of biological role, mRNA decapping enzyme that specifically removes the nicotinamide adenine dinucleotide (NAD) cap from a subset of mRNAs by hydrolyzing the diphosphate linkage to produce nicotinamide mononucleotide (NMN) and 5' monophosphate mRNA. The NAD-cap is present at the 5'-end of some mRNAs and stabilizes RNA against 5'-processing. Has preference for mRNAs with a 5'-end purine. Catalyzes the hydrolysis of a broad range of dinucleotide pyrophosphates. The polypeptide is NAD-capped RNA hydrolase NudC (Mycobacterium bovis (strain ATCC BAA-935 / AF2122/97)).